The primary structure comprises 139 residues: Large ribosomal subunit protein uL22 (139 aa).

The interval 1 to 21 is disordered; sequence MTAPTPEFRNKKQRKQQVKLR.

The protein belongs to the universal ribosomal protein uL22 family. Part of the 50S ribosomal subunit.

Functionally, this protein binds specifically to 23S rRNA; its binding is stimulated by other ribosomal proteins, e.g. L4, L17, and L20. It is important during the early stages of 50S assembly. It makes multiple contacts with different domains of the 23S rRNA in the assembled 50S subunit and ribosome. In terms of biological role, the globular domain of the protein is located near the polypeptide exit tunnel on the outside of the subunit, while an extended beta-hairpin is found that lines the wall of the exit tunnel in the center of the 70S ribosome. The polypeptide is Large ribosomal subunit protein uL22 (Deinococcus deserti (strain DSM 17065 / CIP 109153 / LMG 22923 / VCD115)).